We begin with the raw amino-acid sequence, 491 residues long: Glutamyl-tRNA(Gln) amidotransferase subunit A (491 aa).

Active-site charge relay system residues include Lys-79 and Ser-158. The Acyl-ester intermediate role is filled by Ser-182.

Belongs to the amidase family. GatA subfamily. As to quaternary structure, heterotrimer of A, B and C subunits.

It carries out the reaction L-glutamyl-tRNA(Gln) + L-glutamine + ATP + H2O = L-glutaminyl-tRNA(Gln) + L-glutamate + ADP + phosphate + H(+). Its function is as follows. Allows the formation of correctly charged Gln-tRNA(Gln) through the transamidation of misacylated Glu-tRNA(Gln) in organisms which lack glutaminyl-tRNA synthetase. The reaction takes place in the presence of glutamine and ATP through an activated gamma-phospho-Glu-tRNA(Gln). This Maricaulis maris (strain MCS10) (Caulobacter maris) protein is Glutamyl-tRNA(Gln) amidotransferase subunit A.